A 753-amino-acid chain; its full sequence is Striatin-4 (753 aa).

The tract at residues 10–65 (VAAAASSCRPLGSGAGPGPTGAAPVSAPAPGPGPAGKGGGGGGSPGPTAGPEPLSL) is disordered. Residues 43 to 54 (PAGKGGGGGGSP) are compositionally biased toward gly residues. The residue at position 53 (serine 53) is a Phosphoserine. Positions 69–136 (LHFIQHEWAR…QERAKYHKLK (68 aa)) form a coiled coil. The caveolin-binding stretch occupies residues 71–79 (FIQHEWARF). The calmodulin-binding stretch occupies residues 165 to 182 (ENSPLVWKEGRQLLRQYL). Serine 206 carries the phosphoserine modification. Disordered regions lie at residues 213 to 232 (VEPSEGAPRAPPGPAGLSGG), 271 to 345 (CEDE…SPHE), and 363 to 382 (VDGLPPKVTGPPPGTPQPRP). Acidic residues-rich tracts occupy residues 271-283 (CEDEDSDEDDELD) and 302-317 (EMEDEDEEDDSEDAIN). Residue serine 276 is modified to Phosphoserine. The segment covering 332-345 (PDPRRCTVDGSPHE) has biased composition (basic and acidic residues). The segment covering 370-380 (VTGPPPGTPQP) has biased composition (pro residues). WD repeat units lie at residues 436–475 (SHYDGIRSLAFHHSQSALLTASEDGTLKLWNLQKAVTAKK), 489–528 (AHRGPVLAVAMGSNSEYCYSGGADACIHSWKIPDLSMDPY), 542–581 (GHGDAVWGLAFSPTSQRLASCSADGTVRIWDPSSSSPACL), 587–628 (ASEH…ALLT), 635–674 (SGPTQINQVVSHPNQPLTITAHDDRGIRFLDNRTGKPVHS), 677–716 (AHLDAVTCLAVDPNGAFLMSGSHDCSLRLWSLDNKTCVQE), and 723–753 (KHEEAIHAVACHPSKALIASAGADALAKVFV).

Belongs to the WD repeat striatin family. As to quaternary structure, part of the core of STRIPAK complexes composed of PP2A catalytic and scaffolding subunits, the striatins (PP2A regulatory subunits), the striatin-associated proteins MOB4, STRIP1 and STRIP2, PDCD10 and members of the STE20 kinases, such as STK24 and STK26. Interacts with CTTNBP2NL.

It is found in the cytoplasm. Calmodulin-binding scaffolding protein which is the center of the striatin-interacting phosphatase and kinase (STRIPAK) complexes. STRIPAK complexes have critical roles in protein (de)phosphorylation and are regulators of multiple signaling pathways including Hippo, MAPK, nuclear receptor and cytoskeleton remodeling. Different types of STRIPAK complexes are involved in a variety of biological processes such as cell growth, differentiation, apoptosis, metabolism and immune regulation. Key regulator of the expanded Hippo signaling pathway by interacting and allowing the inhibition of MAP4K kinases by the STRIPAK complex. This chain is Striatin-4, found in Homo sapiens (Human).